The chain runs to 882 residues: Holliday junction resolvase MOC1, chloroplastic (882 aa).

Disordered regions lie at residues 87–148 (IRDG…QTPT) and 323–351 (TPAA…PRAA). A compositionally biased stretch (polar residues) spans 91–111 (PNSNSRCSTVRTHATRSKSTG). Residues 112 to 125 (PSRATSSGPATAAP) show a composition bias toward low complexity. A compositionally biased stretch (polar residues) spans 134–148 (NDTQDGGLTSEQTPT). The segment covering 323 to 337 (TPAAASQTPPTTVTS) has biased composition (low complexity). Mg(2+)-binding residues include aspartate 397, glutamate 552, asparagine 629, and aspartate 634. The disordered stretch occupies residues 710 to 882 (KVERKAQARS…DGGVSGSESE (173 aa)). Positions 732–743 (EEPEAQAEEEQA) are enriched in acidic residues. 4 stretches are compositionally biased toward low complexity: residues 744 to 758 (EAGT…GAAA), 769 to 783 (VESG…VAAG), 810 to 819 (SGKSSSKAEA), and 830 to 844 (ASVG…SVGS). 2 stretches are compositionally biased toward gly residues: residues 845–857 (SSGG…GGVK) and 868–882 (AKAG…SESE).

The cofactor is Mg(2+). It depends on Mn(2+) as a cofactor.

The protein localises to the plastid. The protein resides in the chloroplast. The catalysed reaction is Endonucleolytic cleavage at a junction such as a reciprocal single-stranded crossover between two homologous DNA duplexes (Holliday junction).. A structure-specific endonuclease that resolves Holliday junction (HJ) intermediates during genetic recombination. Cleaves 4-way DNA junctions introducing paired nicks in opposing strands, leaving a 5'-terminal phosphate and a 3'-terminal hydroxyl group that are ligated to produce recombinant products. Mediates chloroplast nucleoid segregation during chloroplast division. In Chlamydomonas reinhardtii (Chlamydomonas smithii), this protein is Holliday junction resolvase MOC1, chloroplastic.